We begin with the raw amino-acid sequence, 421 residues long: Probable 26S proteasome regulatory subunit rpn6 (421 aa).

The 170-residue stretch at Asp-221–Gln-390 folds into the PCI domain.

Belongs to the proteasome subunit S9 family. Component of the lid subcomplex of the 19S proteasome regulatory particle complex (also named PA700 complex). The 26S proteasome consists of a 20S proteasome core and two 19S regulatory subunits.

Its function is as follows. Component of the lid subcomplex of the 26S proteasome, a multiprotein complex involved in the ATP-dependent degradation of ubiquitinated proteins. In the complex, rpn6 is required for proteasome assembly. The sequence is that of Probable 26S proteasome regulatory subunit rpn6 (rpn6) from Schizosaccharomyces pombe (strain 972 / ATCC 24843) (Fission yeast).